The sequence spans 545 residues: Cytochrome P450 monooxygenase sdnB (545 aa).

A glycan (N-linked (GlcNAc...) asparagine) is linked at asparagine 5. The helical transmembrane segment at 30–50 (SILALTPLQGIALFLCLFWGY) threads the bilayer. Asparagine 276 carries an N-linked (GlcNAc...) asparagine glycan. The helical transmembrane segment at 322-342 (LPILILIILVPAAHTTAMGIS) threads the bilayer. 2 N-linked (GlcNAc...) asparagine glycosylation sites follow: asparagine 393 and asparagine 476. Cysteine 486 serves as a coordination point for heme.

Belongs to the cytochrome P450 family. The cofactor is heme.

The protein localises to the membrane. The protein operates within antibiotic biosynthesis. Cytochrome P450 monooxygenase; part of the gene cluster that mediates the biosynthesis of sordarin and hypoxysordarin, glycoside antibiotics with a unique tetracyclic diterpene aglycone structure. First, the geranylgeranyl diphosphate synthase sdnC constructs GGDP from farnesyl diphosphate and isopentenyl diphosphate. The diterpene cyclase sdnA then catalyzes the cyclization of GGDP to afford cycloaraneosene. Cycloaraneosene is then hydroxylated four times by the putative cytochrome P450 monooxygenases sdnB, sdnE, sdnF and sdnH to give a hydroxylated cycloaraneosene derivative such as cycloaraneosene-8,9,13,19-tetraol. Although the order of the hydroxylations is unclear, at least C8, C9 and C13 of the cycloaraneosene skeleton are hydroxylated before the sordaricin formation. Dehydration of the 13-hydroxy group of the hydroxylated cycloaraneosene derivative might be catalyzed by an unassigned hypothetical protein such as sdnG and sdnP to construct the cyclopentadiene moiety. The FAD-dependent oxidoreductase sdnN is proposed to catalyze the oxidation at C9 of the hydroxylated cycloaraneosene derivative and also catalyze the Baeyer-Villiger oxidation to give the lactone intermediate. The presumed lactone intermediate would be hydrolyzed to give an acrolein moiety and a carboxylate moiety. Then, [4+2]cycloaddition would occur between the acrolein moiety and the cyclopentadiene moiety to give sordaricin. SdnN might also be involved in the [4+2]cycloaddition after the hypothesized oxidation to accommodate the oxidized product and prompt the [4+2]cycloaddition. GDP-6-deoxy-D-altrose may be biosynthesized from GDP-D-mannose by the putative GDP-mannose-4,6-dehydratase sdnI and the short-chain dehydrogenase sdnK. The glycosyltransferase sdnJ catalyzes the attachment of 6-deoxy-D-altrose onto the 19-hydroxy group of sordaricin to give 4'-O-demethylsordarin. The methyltransferase sdnD would complete the biosynthesis of sordarin. Sordarin can be further modified into hypoxysordarin. The unique acyl chain at the 3'-hydroxy group of hypoxysordarin would be constructed by an iterative type I PKS sdnO and the trans-acting polyketide methyltransferase sdnL. SdnL would be responsible for the introduction of an alpha-methyl group of the polyketide chain. Alternatively, the beta-lactamase-like protein sdnR might be responsible for the cleavage and transfer of the polyketide chain from the PKS sdnO to sordarin. Two putative cytochrome P450 monooxygenases, sdnQ and sdnT, might catalyze the epoxidations of the polyketide chain to complete the biosynthesis of hypoxysordarin. Transcriptional regulators sdnM and sdnS are presumably encoded for the transcriptional regulation of the expression of the sdn gene cluster. The polypeptide is Cytochrome P450 monooxygenase sdnB (Sordaria araneosa (Pleurage araneosa)).